A 394-amino-acid polypeptide reads, in one-letter code: Elongation factor Tu (394 aa).

Residues 10 to 205 (KPHMNVGTIG…SMDNYFDLPE (196 aa)) enclose the tr-type G domain. The interval 19 to 26 (GHVDHGKT) is G1. A GTP-binding site is contributed by 19–26 (GHVDHGKT). Thr-26 is a binding site for Mg(2+). The G2 stretch occupies residues 61-65 (GITIN). The G3 stretch occupies residues 82–85 (DCPG). Residues 82-86 (DCPGH) and 137-140 (NKLD) each bind GTP. Positions 137–140 (NKLD) are G4. The interval 173-175 (SAF) is G5.

Belongs to the TRAFAC class translation factor GTPase superfamily. Classic translation factor GTPase family. EF-Tu/EF-1A subfamily. In terms of assembly, monomer.

Its subcellular location is the cytoplasm. The enzyme catalyses GTP + H2O = GDP + phosphate + H(+). Functionally, GTP hydrolase that promotes the GTP-dependent binding of aminoacyl-tRNA to the A-site of ribosomes during protein biosynthesis. The polypeptide is Elongation factor Tu (Borreliella burgdorferi (strain ATCC 35210 / DSM 4680 / CIP 102532 / B31) (Borrelia burgdorferi)).